The primary structure comprises 250 residues: NH(3)-dependent NAD(+) synthetase (250 aa).

30-37 (GVSGGIDS) serves as a coordination point for ATP. A Mg(2+)-binding site is contributed by Asp36. Arg117 is a deamido-NAD(+) binding site. An ATP-binding site is contributed by Thr137. Residue Glu142 coordinates Mg(2+). Deamido-NAD(+) contacts are provided by Lys150 and Asp157. ATP contacts are provided by Lys166 and Ser188. 234–235 (HK) contributes to the deamido-NAD(+) binding site.

The protein belongs to the NAD synthetase family. As to quaternary structure, homodimer.

The catalysed reaction is deamido-NAD(+) + NH4(+) + ATP = AMP + diphosphate + NAD(+) + H(+). The protein operates within cofactor biosynthesis; NAD(+) biosynthesis; NAD(+) from deamido-NAD(+) (ammonia route): step 1/1. In terms of biological role, catalyzes the ATP-dependent amidation of deamido-NAD to form NAD. Uses ammonia as a nitrogen source. The polypeptide is NH(3)-dependent NAD(+) synthetase (Mannheimia succiniciproducens (strain KCTC 0769BP / MBEL55E)).